Reading from the N-terminus, the 317-residue chain is Non-structural protein 2 (317 aa).

Residues 107 to 109 (SIR), lysine 188, and 221 to 223 (HGK) each bind ATP. The segment at 205–241 (LVAELRWQYNKFAVITHGKGHYRIVKYSSVANHADRV) is RNA-binding. Histidine 225 acts as the For NTPase and RTPase activities in catalysis. Arginine 227 serves as a coordination point for ATP.

Belongs to the rotavirus NSP2 family. In terms of assembly, homooctamer. Interacts with VP1; this interaction is weak. Interacts with NSP5; this interaction leads to up-regulation of NSP5 phosphorylation and formation of viral factories. Interacts with host DCP1A, DCP1B, DDX6, EDC4 and EIF2S1/eIF2-alpha; these interactions are probably part of the sequestration of some host SGs and PBs proteins in viral factories. Requires Mg(2+) as cofactor.

The protein resides in the host cytoplasm. In terms of biological role, participates in replication and packaging of the viral genome. Plays a crucial role, together with NSP5, in the formation of virus factories (viroplasms), which are large inclusions in the host cytoplasm where replication intermediates are assembled and viral RNA replication takes place. Displays ssRNA binding, NTPase, RNA triphosphatase (RTPase) and ATP-independent helix-unwinding activities. The unwinding activity may prepare and organize plus-strand RNAs for packaging and replication by removing interfering secondary structures. The RTPase activity plays a role in the removal of the gamma-phosphate from the rotavirus RNA minus strands of dsRNA genome segments. Participates in the selective exclusion of host proteins from stress granules (SG) and P bodies (PB). Also participates in the sequestration of these remodeled organelles in viral factories. This Rotavirus A (strain RVA/SA11-Patton/G3P[X]) (RV-A) protein is Non-structural protein 2.